The primary structure comprises 440 residues: Transposon TyH3 Gag polyprotein (440 aa).

3 stretches are compositionally biased toward polar residues: residues 1 to 23, 48 to 60, and 127 to 152; these read MESQ…SVTS, TKAN…TPAS, and QSQF…GNTF. 3 disordered regions span residues 1–93, 126–173, and 352–440; these read MESQ…MMTQ, PQSQ…RPPP, and GSRN…PETY. A compositionally biased stretch (low complexity) spans 153–165; that stretch reads TDSSSADSDMTST. Positions 299–401 are RNA-binding; sequence NNGIHINNKV…NSKSKTARAH (103 aa). Positions 402–418 are enriched in low complexity; sequence NVSTSNNSPSTDNDSIS. Residue serine 416 is modified to Phosphoserine. A compositionally biased stretch (polar residues) spans 419–428; it reads KSTTEPIQLN. Residues 429–440 show a composition bias toward basic and acidic residues; that stretch reads NKHDLHLRPETY.

In terms of assembly, homotrimer.

Its subcellular location is the cytoplasm. Its function is as follows. Capsid protein (CA) is the structural component of the virus-like particle (VLP), forming the shell that encapsulates the retrotransposons dimeric RNA genome. The particles are assembled from trimer-clustered units and there are holes in the capsid shells that allow for the diffusion of macromolecules. CA also has nucleocapsid-like chaperone activity, promoting primer tRNA(i)-Met annealing to the multipartite primer-binding site (PBS), dimerization of Ty1 RNA and initiation of reverse transcription. In Saccharomyces cerevisiae (Baker's yeast), this protein is Transposon TyH3 Gag polyprotein (TY1A).